A 778-amino-acid chain; its full sequence is Degenerin deg-1 (778 aa).

Residues M1–M82 are Cytoplasmic-facing. Residues W83 to F103 form a helical membrane-spanning segment. Over K104–G711 the chain is Extracellular. Positions N154 to K165 are enriched in basic and acidic residues. Disordered regions lie at residues N154–Q180 and S201–I220. N-linked (GlcNAc...) asparagine glycans are attached at residues N202, N209, N272, and N342. Low complexity predominate over residues T346–T369. The interval T346–N380 is disordered. N473, N492, and N606 each carry an N-linked (GlcNAc...) asparagine glycan. The chain crosses the membrane as a helical span at residues H712–V732. At D733 to I778 the chain is on the cytoplasmic side.

It belongs to the amiloride-sensitive sodium channel (TC 1.A.6) family.

The protein resides in the membrane. Probable sodium channel subunit. Required by a subset of neurons. The protein is Degenerin deg-1 of Caenorhabditis elegans.